Reading from the N-terminus, the 1180-residue chain is MARHGDTRSPSPVGSTYSSSRRNRRDDDRYERSRRDDGRSYRRSRSPERRYRERERDRDRDAFRRRDRSLDRRDEDSYRPGRRERSRDRRRSRERDDYRRRSRDRDYRSRREDSRDRARRRTDDSADLKYKSRRDDSRDRAKDAPRSRETSKPSTPAATAAPTEDEKRAERLAKLEAWKQKQAAEKERKQREAAAAGGARSILEEIDRKSGLSPAVSSPQSPATPGVDATPGTYTGKFDPKAIAKSASSTPAPPAVLGNDVAVPPSVKPVTTIPSQVKPKSTTSASATLKAKGNVGGFGLGTKQAADTEKSTATKTLGFGEEESTRRKLERLPTPPLEDAKDVNGTADGAADEDEDDVDMQDGGTEEEAAAAARAAAERREERLQSEAIKAQSNGAESNDTVMGDAPSQEAADNMEVDAQEEEEIDPLDAFMSELAESAPPKKKVGAKFSRTKEQQPEALFGDEHDIDMTAVGDGDADDFLAIANKAKKKKDIPAVDHKKVEYETFRKKFYTEPSDLAQMSDEEAASLRLELDGIKVRGVDVPKPVQKWSQCGLGVQTLDVIDKLGYEKTTSIQAQAIPAIMSGRDVIGVAKTGSGKTIAFLIPMFRHIKDQRPLDNMEGPVGLIMTPTRELATQIHKDCKPFLKALNLRAVCAYGGAPIKDQIADLKRGAEIIVCTPGRMIDLLAANAGRVTNLRRVTYVVLDEADRMFDMGFEPQVMKIMANIRPDRQTVLFSATFPRNMEALARKTLTKPIEIVVGGKSVVAPEITQIVEVRNDDQKFVRLLELLGNLYSSDENEDARALIFVDRQEAADALLRELMRKGYPCMSIHGGKDQIDRDSTIEDFKAGIFPVLIATSVAARGLDVKQLKLVVNYDAPNHLEDYVHRAGRTGRAGNTGTAVTFLTEDQERYSVDIAKALKQSGQKVPEPVQKLVDAFLEKVKAGKEKASASGFGGKGLERLDQERDAARMRERRTYKTGEEGEDEEEKEEKNEQAEERFNKAISSVQSTAAPSLPGVPKGIDLDGKITVHKTEKDPNSTSKNPLDKVGSAVADIHARLSRAGVMRSGVPIDNRGPDAGAFHATLEINDFPQKARWAVTNRTNVAKILEATGTSITTKGSFYPTGKVPGPGENPKLYILVEGETELAVTNAMRELMRLLKEGTIAAADSDARAPVGGRYNVV.

The disordered stretch occupies residues 1-421 (MARHGDTRSP…ADNMEVDAQE (421 aa)). Residues 8–20 (RSPSPVGSTYSSS) are compositionally biased toward low complexity. Positions 24 to 151 (RRDDDRYERS…KDAPRSRETS (128 aa)) are enriched in basic and acidic residues. Residues 152-162 (KPSTPAATAAP) are compositionally biased toward low complexity. A compositionally biased stretch (basic and acidic residues) spans 164 to 192 (EDEKRAERLAKLEAWKQKQAAEKERKQRE). Residues 241–250 (KAIAKSASST) are compositionally biased toward low complexity. The span at 272–287 (TIPSQVKPKSTTSASA) shows a compositional bias: polar residues. Residues 350 to 369 (AADEDEDDVDMQDGGTEEEA) are compositionally biased toward acidic residues. A compositionally biased stretch (basic and acidic residues) spans 376–385 (AAERREERLQ). Residues 391–401 (AQSNGAESNDT) show a composition bias toward polar residues. The Q motif signature appears at 547–575 (QKWSQCGLGVQTLDVIDKLGYEKTTSIQA). The 179-residue stretch at 578 to 756 (IPAIMSGRDV…RKTLTKPIEI (179 aa)) folds into the Helicase ATP-binding domain. 591–598 (AKTGSGKT) lines the ATP pocket. Positions 704 to 707 (DEAD) match the DEAD box motif. In terms of domain architecture, Helicase C-terminal spans 783 to 933 (RLLELLGNLY…KVPEPVQKLV (151 aa)). The tract at residues 947–996 (ASASGFGGKGLERLDQERDAARMRERRTYKTGEEGEDEEEKEEKNEQAEE) is disordered. A compositionally biased stretch (basic and acidic residues) spans 956 to 979 (GLERLDQERDAARMRERRTYKTGE).

Belongs to the DEAD box helicase family. DDX46/PRP5 subfamily.

The protein localises to the nucleus. The enzyme catalyses ATP + H2O = ADP + phosphate + H(+). Functionally, ATP-dependent RNA helicase involved spliceosome assembly and in nuclear splicing. Catalyzes an ATP-dependent conformational change of U2 snRNP. Bridges U1 and U2 snRNPs and enables stable U2 snRNP association with intron RNA. This chain is Pre-mRNA-processing ATP-dependent RNA helicase prp5 (prp5), found in Aspergillus niger (strain ATCC MYA-4892 / CBS 513.88 / FGSC A1513).